We begin with the raw amino-acid sequence, 319 residues long: Ribonuclease Z (319 aa).

7 residues coordinate Zn(2+): His62, His64, Asp66, His67, His145, Asp215, and His273. Catalysis depends on Asp66, which acts as the Proton acceptor.

It belongs to the RNase Z family. As to quaternary structure, homodimer. Zn(2+) is required as a cofactor.

It catalyses the reaction Endonucleolytic cleavage of RNA, removing extra 3' nucleotides from tRNA precursor, generating 3' termini of tRNAs. A 3'-hydroxy group is left at the tRNA terminus and a 5'-phosphoryl group is left at the trailer molecule.. In terms of biological role, zinc phosphodiesterase, which displays some tRNA 3'-processing endonuclease activity. Probably involved in tRNA maturation, by removing a 3'-trailer from precursor tRNA. This is Ribonuclease Z from Borreliella burgdorferi (strain ATCC 35210 / DSM 4680 / CIP 102532 / B31) (Borrelia burgdorferi).